Here is a 595-residue protein sequence, read N- to C-terminus: O-phosphoseryl-tRNA(Sec) selenium transferase (595 aa).

Arginine 75 contacts pyridoxal 5'-phosphate. Residues 96–106 (GRSGDLFSEQP) are phosphate loop (P-loop). Substrate-binding residues include arginine 97, serine 98, and glutamine 105. Over residues 174 to 187 (RTVTKDSTSATSAA) the composition is skewed to polar residues. Disordered regions lie at residues 174–208 (RTVT…TSLP) and 257–278 (STNR…TPTS). Positions 196-205 (EADRDRHDRT) are enriched in basic and acidic residues. Arginine 358 serves as a coordination point for tRNA. An N6-(pyridoxal phosphate)lysine modification is found at lysine 371. Arginine 400 provides a ligand contact to substrate.

It belongs to the SepSecS family. Homotetramer composed of two homodimers. It depends on pyridoxal 5'-phosphate as a cofactor.

Its subcellular location is the cytoplasm. It catalyses the reaction O-phospho-L-seryl-tRNA(Sec) + selenophosphate + H2O = L-selenocysteinyl-tRNA(Sec) + 2 phosphate. The protein operates within aminoacyl-tRNA biosynthesis; selenocysteinyl-tRNA(Sec) biosynthesis; selenocysteinyl-tRNA(Sec) from L-seryl-tRNA(Sec) (archaeal/eukaryal route): step 2/2. Its function is as follows. Converts O-phosphoseryl-tRNA(Sec) to selenocysteinyl-tRNA(Sec) required for selenoprotein biosynthesis. The protein is O-phosphoseryl-tRNA(Sec) selenium transferase of Leishmania donovani.